Here is a 208-residue protein sequence, read N- to C-terminus: Uracil phosphoribosyltransferase (208 aa).

Residues Arg-78, Arg-103, and 130-138 (DPMLATGGS) each bind 5-phospho-alpha-D-ribose 1-diphosphate. Uracil is bound by residues Ile-193 and 198 to 200 (GDA). A 5-phospho-alpha-D-ribose 1-diphosphate-binding site is contributed by Asp-199.

Belongs to the UPRTase family. Mg(2+) is required as a cofactor.

It catalyses the reaction UMP + diphosphate = 5-phospho-alpha-D-ribose 1-diphosphate + uracil. It functions in the pathway pyrimidine metabolism; UMP biosynthesis via salvage pathway; UMP from uracil: step 1/1. With respect to regulation, allosterically activated by GTP. In terms of biological role, catalyzes the conversion of uracil and 5-phospho-alpha-D-ribose 1-diphosphate (PRPP) to UMP and diphosphate. This chain is Uracil phosphoribosyltransferase, found in Shewanella frigidimarina (strain NCIMB 400).